Here is a 285-residue protein sequence, read N- to C-terminus: MATKLQDGNTPCLAATPSEPRPTVLVFDSGVGGLSVYDEIRHLLPDLHYIYAFDNVAFPYGEKSEVFIVERVVEIVTAVQERYPLALAVVACNTASTVSLPALREKFDFPVVGVVPAIKPAARLTANGIVGLLATRGTVKRSYTHELIARFANECQIEMLGSAEMVELAEAKLHGEDVSLDALKRILRPWLRMKEPPDTVVLGCTHFPLLQEELLQVLPEGTRLVDSGAAIARRTAWLLEHEAPDAKSADANIAFCMAMTPEAEQLLPVLQRYGFETLEKLAVLG.

Substrate is bound by residues 28–29 and 60–61; these read DS and YG. C92 acts as the Proton donor/acceptor in catalysis. 93–94 is a substrate binding site; the sequence is NT. C204 (proton donor/acceptor) is an active-site residue. Residue 205-206 participates in substrate binding; sequence TH.

The protein belongs to the aspartate/glutamate racemases family.

It catalyses the reaction L-glutamate = D-glutamate. Its pathway is cell wall biogenesis; peptidoglycan biosynthesis. Provides the (R)-glutamate required for cell wall biosynthesis. This is Glutamate racemase from Escherichia coli (strain UTI89 / UPEC).